Reading from the N-terminus, the 147-residue chain is Hemoglobin subunit beta (147 aa).

Residues 2-147 (HWEDAEKQYI…ISHSLGREYH (146 aa)) enclose the Globin domain. Residues histidine 63 and histidine 92 each coordinate heme b.

The protein belongs to the globin family. In terms of assembly, heterotetramer of two alpha chains and two beta chains. As to expression, red blood cells.

Functionally, involved in oxygen transport from the lung to the various peripheral tissues. The polypeptide is Hemoglobin subunit beta (HBB) (Lepidosiren paradoxus (South American lungfish)).